Consider the following 78-residue polypeptide: UPF0369 protein RP167 (78 aa).

This sequence belongs to the SDHAF4 family.

This chain is UPF0369 protein RP167, found in Rickettsia prowazekii (strain Madrid E).